The primary structure comprises 300 residues: Fatty acid elongase 3 (300 aa).

3 consecutive transmembrane segments (helical) span residues Val31–Met51, Phe61–Cys81, and Ile127–Glu147. Residues His165 to His169 carry the HxxHH motif motif. Residue His168 is the Nucleophile of the active site. Helical transmembrane passes span Ala170–Phe190, Thr192–Met212, Ile219–Leu239, and Met261–Ser283.

This sequence belongs to the ELO family.

It is found in the endoplasmic reticulum membrane. The enzyme catalyses an acyl-CoA + malonyl-CoA + H(+) = a 3-oxoacyl-CoA + CO2 + CoA. It participates in lipid metabolism; fatty acid biosynthesis. Involved in the synthesis of fatty acids. Elongates C14 fatty acids to C18. Required for the maintenance of the global lipidome profile in this parasite. This Trypanosoma cruzi (strain CL Brener) protein is Fatty acid elongase 3.